The following is a 180-amino-acid chain: 3-hydroxyanthranilate 3,4-dioxygenase (180 aa).

Position 46 (Arg46) interacts with O2. Residues His50, Glu56, and His94 each coordinate Fe cation. Position 56 (Glu56) interacts with substrate. 2 residues coordinate substrate: Arg98 and Glu109. Cys124, Cys127, Cys161, and Cys164 together coordinate Fe cation.

This sequence belongs to the 3-HAO family. In terms of assembly, homodimer. It depends on Fe(2+) as a cofactor.

It catalyses the reaction 3-hydroxyanthranilate + O2 = (2Z,4Z)-2-amino-3-carboxymuconate 6-semialdehyde. Its pathway is cofactor biosynthesis; NAD(+) biosynthesis; quinolinate from L-kynurenine: step 3/3. In terms of biological role, catalyzes the oxidative ring opening of 3-hydroxyanthranilate to 2-amino-3-carboxymuconate semialdehyde, which spontaneously cyclizes to quinolinate. This chain is 3-hydroxyanthranilate 3,4-dioxygenase, found in Ruegeria pomeroyi (strain ATCC 700808 / DSM 15171 / DSS-3) (Silicibacter pomeroyi).